Reading from the N-terminus, the 278-residue chain is SPX domain-containing protein 2 (278 aa).

The region spanning 1 to 162 (MKFGKSLSSQ…GSMIRLPFVQ (162 aa)) is the SPX domain. Disordered stretches follow at residues 191–242 (PTNE…KSTV) and 255–278 (GSSTVSVFSLPPLHGSNGQDEPGR).

Interacts (via SPX domain) with PHR2 (via C-terminus). Interacts with RLI1 in the nucleus to prevents its positive regulation of leaf inclination during phosphate (Pi) starvation.

The protein resides in the nucleus. In terms of biological role, inhibits PHR2 DNA-binding activity via a phosphate (Pi)-dependent protein interaction. Together with SPX1, plays a negative role in the regulation of leaf inclination by preventing RLI1 transcription factor activity in Pi depleted conditions. In Oryza sativa subsp. indica (Rice), this protein is SPX domain-containing protein 2.